The sequence spans 227 residues: Phosphatidate cytidylyltransferase (227 aa).

Transmembrane regions (helical) follow at residues 31–51, 65–85, 93–113, 131–151, 165–185, and 206–226; these read FVIA…LVGM, IPYL…LTFL, WLIM…MIGG, WSGL…ASFI, IYLF…DLFI, and GVLD…FISI.

The protein belongs to the CDS family.

It localises to the cell membrane. The enzyme catalyses a 1,2-diacyl-sn-glycero-3-phosphate + CTP + H(+) = a CDP-1,2-diacyl-sn-glycerol + diphosphate. It participates in phospholipid metabolism; CDP-diacylglycerol biosynthesis; CDP-diacylglycerol from sn-glycerol 3-phosphate: step 3/3. The chain is Phosphatidate cytidylyltransferase (cdsA) from Rickettsia felis (strain ATCC VR-1525 / URRWXCal2) (Rickettsia azadi).